We begin with the raw amino-acid sequence, 332 residues long: Adenosine receptor A2b (332 aa).

Residues 1 to 8 are Extracellular-facing; the sequence is MQLETQDA. The chain crosses the membrane as a helical span at residues 9–33; sequence LYVALELVIAALAVAGNVLVCAAVG. The Cytoplasmic segment spans residues 34-43; it reads ASSALQTPTN. A helical membrane pass occupies residues 44-67; it reads YFLVSLATADVAVGLFAIPFAITI. The Extracellular segment spans residues 68–78; sequence SLGFCTDFHGC. A disulfide bridge connects residues C78 and C171. Residues 79–101 form a helical membrane-spanning segment; it reads LFLACFVLVLTQSSIFSLLAVAV. Over 102–121 the chain is Cytoplasmic; that stretch reads DRYLAIRVPLRYKGLVTGTR. A helical transmembrane segment spans residues 122–144; it reads ARGIIAVLWVLAFGIGLTPFLGW. The Extracellular portion of the chain corresponds to 145–178; the sequence is NSKDSATSNCTELGDGIANKSCCPVTCLFENVVP. N-linked (GlcNAc...) asparagine glycans are attached at residues N153 and N163. E174 is a binding site for adenosine. Residues 179–203 traverse the membrane as a helical segment; it reads MSYMVYFNFFGCVLPPLLIMLVIYI. Residues 204–235 are Cytoplasmic-facing; it reads KIFMVACKQLQRMELMDHSRTTLQREIHAAKS. A helical transmembrane segment spans residues 236-259; sequence LAMIVGIFALCWLPVHAINCITLF. Position 254 (N254) interacts with adenosine. The Extracellular portion of the chain corresponds to 260–267; sequence HPALAKDK. The helical transmembrane segment at 268–291 threads the bilayer; sequence PKWVMNVAILLSHANSVVNPIVYA. Adenosine-binding residues include S279 and H280. Residues 292 to 332 lie on the Cytoplasmic side of the membrane; it reads YRNRDFRYSFHKIISRYVLCQAETKGGSGQAGAQSTLSLGL. C311 carries S-palmitoyl cysteine lipidation.

It belongs to the G-protein coupled receptor 1 family.

The protein resides in the cell membrane. Receptor for adenosine. The activity of this receptor is mediated by G proteins which activate adenylyl cyclase. This chain is Adenosine receptor A2b (Adora2b), found in Mus musculus (Mouse).